The sequence spans 1382 residues: Histone-lysine N-methyltransferase SUVR5 (1382 aa).

Disordered regions lie at residues 43 to 62 and 354 to 373; these read TVTG…SEPK and GNTN…NTPE. 3 C2H2-type zinc fingers span residues 735 to 758, 769 to 792, and 838 to 861; these read FACA…EERH, LQCI…QAVH, and FVCK…QAEH. Positions 915-935 are disordered; it reads RRMQGSKSLGTEGNTEAGVSP. The span at 919–928 shows a compositional bias: polar residues; it reads GSKSLGTEGN. Residues 1145–1221 enclose the Pre-SET domain; it reads LRCSCRSSVC…TCQNRVLQNG (77 aa). Zn(2+) is bound by residues cysteine 1147, cysteine 1149, cysteine 1154, cysteine 1159, cysteine 1182, cysteine 1203, cysteine 1207, cysteine 1209, and cysteine 1213. Residues 1224–1356 form the SET domain; that stretch reads AKLEVFRTES…AGEEITRDYG (133 aa). S-adenosyl-L-methionine contacts are provided by residues 1234–1236, tyrosine 1277, and 1313–1314; these read KGW and NH. Residue cysteine 1316 participates in Zn(2+) binding. Tyrosine 1355 contributes to the S-adenosyl-L-methionine binding site. The Post-SET domain occupies 1366-1382; it reads NEHPCHCKATNCRGLLS. Zn(2+) contacts are provided by cysteine 1370, cysteine 1372, and cysteine 1377.

This sequence belongs to the class V-like SAM-binding methyltransferase superfamily. In terms of assembly, component of a regulatory complex with LDL1/SWP1. Interacts with LDL1/SWP1.

Its subcellular location is the nucleus. It localises to the chromosome. The catalysed reaction is L-lysyl-[histone] + S-adenosyl-L-methionine = N(6)-methyl-L-lysyl-[histone] + S-adenosyl-L-homocysteine + H(+). In terms of biological role, histone methyltransferase that functions together with its binding partner LDL1/SWP1 as one of the regulators of flower timing in Arabidopsis. Mediates H3K9me2 deposition and regulates gene expression in a DNA methylation-independent manner. Binds DNA through its zinc fingers and represses the expression of a subset of stimulus response genes. May represent a novel mechanism for plants to regulate their chromatin and transcriptional state, which may allow for the adaptability and modulation necessary to rapidly respond to environment or developmental cues. This chain is Histone-lysine N-methyltransferase SUVR5, found in Arabidopsis thaliana (Mouse-ear cress).